Consider the following 290-residue polypeptide: N-acetylmannosamine kinase (290 aa).

ATP is bound by residues A6–K13 and G132–L139. Zn(2+) contacts are provided by H156, C166, C168, and C173.

It belongs to the ROK (NagC/XylR) family. NanK subfamily. As to quaternary structure, homodimer.

It catalyses the reaction an N-acyl-D-mannosamine + ATP = an N-acyl-D-mannosamine 6-phosphate + ADP + H(+). It participates in amino-sugar metabolism; N-acetylneuraminate degradation; D-fructose 6-phosphate from N-acetylneuraminate: step 2/5. Functionally, catalyzes the phosphorylation of N-acetylmannosamine (ManNAc) to ManNAc-6-P. In Yersinia pseudotuberculosis serotype O:3 (strain YPIII), this protein is N-acetylmannosamine kinase.